The chain runs to 98 residues: Integration host factor subunit alpha (98 aa).

The disordered stretch occupies residues 49 to 71 (FGNFDLRDKNQRPGRNPKTGEDI).

The protein belongs to the bacterial histone-like protein family. In terms of assembly, heterodimer of an alpha and a beta chain.

This protein is one of the two subunits of integration host factor, a specific DNA-binding protein that functions in genetic recombination as well as in transcriptional and translational control. In Shewanella sp. (strain ANA-3), this protein is Integration host factor subunit alpha.